The sequence spans 208 residues: Small ribosomal subunit protein uS4 (208 aa).

The S4 RNA-binding domain occupies R98–E159.

The protein belongs to the universal ribosomal protein uS4 family. Part of the 30S ribosomal subunit. Contacts protein S5. The interaction surface between S4 and S5 is involved in control of translational fidelity.

One of the primary rRNA binding proteins, it binds directly to 16S rRNA where it nucleates assembly of the body of the 30S subunit. Functionally, with S5 and S12 plays an important role in translational accuracy. The chain is Small ribosomal subunit protein uS4 from Trichlorobacter lovleyi (strain ATCC BAA-1151 / DSM 17278 / SZ) (Geobacter lovleyi).